The following is a 251-amino-acid chain: 2,3-bisphosphoglycerate-dependent phosphoglycerate mutase (251 aa).

Substrate is bound by residues 13-20, 26-27, Arg-65, 92-95, Lys-103, 119-120, and 186-187; these read RHGESEWN, TG, ERHY, RR, and GN. The active-site Tele-phosphohistidine intermediate is the His-14. The active-site Proton donor/acceptor is the Glu-92.

The protein belongs to the phosphoglycerate mutase family. BPG-dependent PGAM subfamily.

It carries out the reaction (2R)-2-phosphoglycerate = (2R)-3-phosphoglycerate. It participates in carbohydrate degradation; glycolysis; pyruvate from D-glyceraldehyde 3-phosphate: step 3/5. Catalyzes the interconversion of 2-phosphoglycerate and 3-phosphoglycerate. This Rhodococcus jostii (strain RHA1) protein is 2,3-bisphosphoglycerate-dependent phosphoglycerate mutase.